The following is a 57-amino-acid chain: Preprotein translocase subunit SecG (57 aa).

Residues 1-33 (MARRRRYEGLNPFVAAGLIKFSEEGELERIKLT) lie on the Cytoplasmic side of the membrane. A helical membrane pass occupies residues 34–55 (PKSAVVISVALIAAILVLNLIH). At 56-57 (PL) the chain is on the extracellular side.

It belongs to the SEC61-beta family. In terms of assembly, component of the protein translocase complex. Heterotrimer consisting of alpha (SecY), beta (SecG) and gamma (SecE) subunits. Can form oligomers of the heterotrimer.

It localises to the cell membrane. Its function is as follows. Involved in protein export. The function of the beta subunit is unknown, but it may be involved in stabilization of the trimeric complex. This chain is Preprotein translocase subunit SecG, found in Pyrobaculum neutrophilum (strain DSM 2338 / JCM 9278 / NBRC 100436 / V24Sta) (Thermoproteus neutrophilus).